A 341-amino-acid polypeptide reads, in one-letter code: HTH-type transcriptional repressor PurR (341 aa).

Residues 2-56 enclose the HTH lacI-type domain; sequence ATIKDVAKRANVSTTTVSHVINKTRFVAEETRNAVWAAIKELHYSPSAVARSLKV. Residues 4 to 23 constitute a DNA-binding region (H-T-H motif); it reads IKDVAKRANVSTTTVSHVIN. Residues 48–56 mediate DNA binding; that stretch reads SAVARSLKV. Hypoxanthine-binding residues include tyrosine 73, arginine 190, threonine 192, phenylalanine 221, and aspartate 275.

Homodimer.

The protein operates within purine metabolism; purine nucleotide biosynthesis [regulation]. Functionally, is the main repressor of the genes involved in the de novo synthesis of purine nucleotides, regulating purB, purC, purEK, purF, purHD, purL, purMN and guaBA expression. PurR is allosterically activated to bind its cognate DNA by binding the purine corepressors, hypoxanthine or guanine, thereby effecting transcription repression. This is HTH-type transcriptional repressor PurR from Salmonella typhimurium (strain LT2 / SGSC1412 / ATCC 700720).